Reading from the N-terminus, the 221-residue chain is Sugar transporter SWEET1 (221 aa).

The next 7 membrane-spanning stretches (helical) occupy residues 3 to 23 (AGGV…LGMF), 44 to 63 (FLPF…YGVL), 68 to 88 (TLII…LAYL), 102 to 122 (ATLL…VPDL), 129 to 149 (LGLF…ADLA), 160 to 180 (LSFS…IYGF), and 186 to 206 (YITV…VLFY). The MtN3/slv 1 domain maps to 10 to 94 (FLSSACVLFT…LAYLHYSPQK (85 aa)). The region spanning 127–212 (QQLGLFCSVF…VLFYKYPPEQ (86 aa)) is the MtN3/slv 2 domain. Residues 149–221 (AKIIQTKSTQ…QDTKYRLLQT (73 aa)) are mediates interaction with TRPV2.

It belongs to the SWEET sugar transporter family. Interacts with TRPV2; the interaction probably occurs intracellularly and depends on TRPV2 N-glycosylation.

It is found in the golgi apparatus membrane. The protein localises to the cell membrane. Mediates sugar transport across membranes. May stimulate V(D)J recombination by the activation of RAG1. The chain is Sugar transporter SWEET1 (Slc50a1) from Rattus norvegicus (Rat).